A 431-amino-acid chain; its full sequence is Cyclin-B2-4 (431 aa).

Residues 1-30 are disordered; that stretch reads MGGSDENRHGVIGPMNRQQGGLRGGKVIPT.

This sequence belongs to the cyclin family. Cyclin AB subfamily. Interacts with SMR11.

This is Cyclin-B2-4 (CYCB2-4) from Arabidopsis thaliana (Mouse-ear cress).